A 171-amino-acid polypeptide reads, in one-letter code: PBAN-type neuropeptides (171 aa).

Positions 1-22 (MFRLYFFFNVICIFLAIRSAIG) are cleaved as a signal peptide. The propeptide occupies 23-47 (GEVPDATEQKINNFLASGKDSEDLS). L59 bears the Leucine amide mark. The propeptide occupies 63–111 (TIASELHDEMMDEIDDNPLYYSGESPQRVASEIAQGTPYVVLLLTGRVL). The interval 120–151 (HSTTPRLGRRDASSSNENNSRPPFAPRLGRNL) is disordered. Leucine amide is present on residues L126, L147, and L157. Residues 160 to 171 (SFGAPVVDNFAY) constitute a propeptide that is removed on maturation.

It belongs to the pyrokinin family.

It is found in the secreted. Its function is as follows. A hormone that controls sex pheromone production in females and pheromone responsiveness in male. Also mediates visceral muscle contractile activity (myotropic activity). The polypeptide is PBAN-type neuropeptides (Aedes aegypti (Yellowfever mosquito)).